The following is a 624-amino-acid chain: 1-deoxy-D-xylulose-5-phosphate synthase (624 aa).

Thiamine diphosphate is bound by residues His-80 and Gly-121–Ser-123. A Mg(2+)-binding site is contributed by Asp-152. Residues Gly-153–Ala-154, Asn-181, Tyr-288, and Glu-370 each bind thiamine diphosphate. Asn-181 lines the Mg(2+) pocket.

Belongs to the transketolase family. DXPS subfamily. As to quaternary structure, homodimer. Requires Mg(2+) as cofactor. Thiamine diphosphate serves as cofactor.

The catalysed reaction is D-glyceraldehyde 3-phosphate + pyruvate + H(+) = 1-deoxy-D-xylulose 5-phosphate + CO2. It participates in metabolic intermediate biosynthesis; 1-deoxy-D-xylulose 5-phosphate biosynthesis; 1-deoxy-D-xylulose 5-phosphate from D-glyceraldehyde 3-phosphate and pyruvate: step 1/1. Functionally, catalyzes the acyloin condensation reaction between C atoms 2 and 3 of pyruvate and glyceraldehyde 3-phosphate to yield 1-deoxy-D-xylulose-5-phosphate (DXP). This is 1-deoxy-D-xylulose-5-phosphate synthase from Proteus mirabilis (strain HI4320).